A 346-amino-acid chain; its full sequence is Methylthioribose-1-phosphate isomerase (346 aa).

Residues 48–50, R91, and Q196 contribute to the substrate site; that span reads RGA. Catalysis depends on D237, which acts as the Proton donor. 247 to 248 provides a ligand contact to substrate; the sequence is NK.

The protein belongs to the eIF-2B alpha/beta/delta subunits family. MtnA subfamily.

It catalyses the reaction 5-(methylsulfanyl)-alpha-D-ribose 1-phosphate = 5-(methylsulfanyl)-D-ribulose 1-phosphate. The protein operates within amino-acid biosynthesis; L-methionine biosynthesis via salvage pathway; L-methionine from S-methyl-5-thio-alpha-D-ribose 1-phosphate: step 1/6. In terms of biological role, catalyzes the interconversion of methylthioribose-1-phosphate (MTR-1-P) into methylthioribulose-1-phosphate (MTRu-1-P). The polypeptide is Methylthioribose-1-phosphate isomerase (Thermosipho melanesiensis (strain DSM 12029 / CIP 104789 / BI429)).